Reading from the N-terminus, the 147-residue chain is Deoxyuridine 5'-triphosphate nucleotidohydrolase (147 aa).

Substrate is bound by residues 67-69, asparagine 80, and 84-86; these read RSG and TID.

It belongs to the dUTPase family. The cofactor is Mg(2+).

It carries out the reaction dUTP + H2O = dUMP + diphosphate + H(+). It participates in pyrimidine metabolism; dUMP biosynthesis; dUMP from dCTP (dUTP route): step 2/2. In terms of biological role, this enzyme is involved in nucleotide metabolism: it produces dUMP, the immediate precursor of thymidine nucleotides and it decreases the intracellular concentration of dUTP so that uracil cannot be incorporated into DNA. This Anaplasma marginale (strain St. Maries) protein is Deoxyuridine 5'-triphosphate nucleotidohydrolase.